Consider the following 210-residue polypeptide: Tumor protein D53 homolog (210 aa).

A coiled-coil region spans residues 22-73 (VTDVDFTSMISEEEKEELKAELAKLEDEISTLRQVLAAKEKHLIEIKQKLGM). The span at 185–197 (SSTAHASAQSSLA) shows a compositional bias: polar residues. The interval 185-210 (SSTAHASAQSSLAGTRLPESEEELQC) is disordered.

This sequence belongs to the TPD52 family. In terms of assembly, forms a homodimer or heterodimer with other members of the family.

The polypeptide is Tumor protein D53 homolog (TPD52L1) (Gallus gallus (Chicken)).